Here is a 293-residue protein sequence, read N- to C-terminus: Pyridoxal 5'-phosphate synthase subunit PdxS (293 aa).

Asp-23 lines the D-ribose 5-phosphate pocket. Lys-80 (schiff-base intermediate with D-ribose 5-phosphate) is an active-site residue. Gly-152 is a D-ribose 5-phosphate binding site. Arg-164 lines the D-glyceraldehyde 3-phosphate pocket. D-ribose 5-phosphate is bound by residues Gly-213 and 234 to 235 (GS).

This sequence belongs to the PdxS/SNZ family. In terms of assembly, in the presence of PdxT, forms a dodecamer of heterodimers.

It carries out the reaction aldehydo-D-ribose 5-phosphate + D-glyceraldehyde 3-phosphate + L-glutamine = pyridoxal 5'-phosphate + L-glutamate + phosphate + 3 H2O + H(+). It functions in the pathway cofactor biosynthesis; pyridoxal 5'-phosphate biosynthesis. Its function is as follows. Catalyzes the formation of pyridoxal 5'-phosphate from ribose 5-phosphate (RBP), glyceraldehyde 3-phosphate (G3P) and ammonia. The ammonia is provided by the PdxT subunit. Can also use ribulose 5-phosphate and dihydroxyacetone phosphate as substrates, resulting from enzyme-catalyzed isomerization of RBP and G3P, respectively. In Chloroflexus aggregans (strain MD-66 / DSM 9485), this protein is Pyridoxal 5'-phosphate synthase subunit PdxS.